The sequence spans 306 residues: Porphobilinogen deaminase (306 aa).

S-(dipyrrolylmethanemethyl)cysteine is present on cysteine 239.

It belongs to the HMBS family. In terms of assembly, monomer. Dipyrromethane serves as cofactor.

It carries out the reaction 4 porphobilinogen + H2O = hydroxymethylbilane + 4 NH4(+). It participates in porphyrin-containing compound metabolism; protoporphyrin-IX biosynthesis; coproporphyrinogen-III from 5-aminolevulinate: step 2/4. Tetrapolymerization of the monopyrrole PBG into the hydroxymethylbilane pre-uroporphyrinogen in several discrete steps. This chain is Porphobilinogen deaminase, found in Helicobacter pylori (strain Shi470).